A 196-amino-acid polypeptide reads, in one-letter code: Putative NADH dehydrogenase/NAD(P)H nitroreductase SCO5049 (196 aa).

The protein belongs to the nitroreductase family. HadB/RutE subfamily. FMN serves as cofactor.

The protein is Putative NADH dehydrogenase/NAD(P)H nitroreductase SCO5049 of Streptomyces coelicolor (strain ATCC BAA-471 / A3(2) / M145).